The chain runs to 200 residues: Peptidyl-tRNA hydrolase (200 aa).

TRNA is bound at residue Tyr15. His20 serves as the catalytic Proton acceptor. TRNA contacts are provided by Phe66, Asn68, and Asn114.

This sequence belongs to the PTH family. As to quaternary structure, monomer.

It is found in the cytoplasm. The catalysed reaction is an N-acyl-L-alpha-aminoacyl-tRNA + H2O = an N-acyl-L-amino acid + a tRNA + H(+). Hydrolyzes ribosome-free peptidyl-tRNAs (with 1 or more amino acids incorporated), which drop off the ribosome during protein synthesis, or as a result of ribosome stalling. In terms of biological role, catalyzes the release of premature peptidyl moieties from peptidyl-tRNA molecules trapped in stalled 50S ribosomal subunits, and thus maintains levels of free tRNAs and 50S ribosomes. This Ralstonia nicotianae (strain ATCC BAA-1114 / GMI1000) (Ralstonia solanacearum) protein is Peptidyl-tRNA hydrolase.